We begin with the raw amino-acid sequence, 418 residues long: NADH-quinone oxidoreductase subunit D (418 aa).

Belongs to the complex I 49 kDa subunit family. In terms of assembly, NDH-1 is composed of 14 different subunits. Subunits NuoB, C, D, E, F, and G constitute the peripheral sector of the complex.

The protein localises to the cell inner membrane. It carries out the reaction a quinone + NADH + 5 H(+)(in) = a quinol + NAD(+) + 4 H(+)(out). Its function is as follows. NDH-1 shuttles electrons from NADH, via FMN and iron-sulfur (Fe-S) centers, to quinones in the respiratory chain. The immediate electron acceptor for the enzyme in this species is believed to be ubiquinone. Couples the redox reaction to proton translocation (for every two electrons transferred, four hydrogen ions are translocated across the cytoplasmic membrane), and thus conserves the redox energy in a proton gradient. The polypeptide is NADH-quinone oxidoreductase subunit D (Neisseria meningitidis serogroup B (strain ATCC BAA-335 / MC58)).